We begin with the raw amino-acid sequence, 1105 residues long: uncharacterized protein (1105 aa).

The protein belongs to the mycobacterial PPE family.

This is an uncharacterized protein from Mycobacterium tuberculosis (strain CDC 1551 / Oshkosh).